The chain runs to 596 residues: Potassium-transporting ATPase potassium-binding subunit (596 aa).

The next 10 membrane-spanning stretches (helical) occupy residues 6-26 (ILTI…LGGF), 67-87 (AIGL…LQLF), 136-156 (GLTT…IALI), 177-197 (ITLY…VGQG), 283-303 (LSNF…CFTF), 314-334 (WVVL…AVHF), 413-433 (GLYG…LMIG), 450-470 (MVAI…AIAV), 518-538 (MLAI…LALA), and 560-580 (LFIV…YVPA).

Belongs to the KdpA family. The system is composed of three essential subunits: KdpA, KdpB and KdpC.

Its subcellular location is the cell inner membrane. Its function is as follows. Part of the high-affinity ATP-driven potassium transport (or Kdp) system, which catalyzes the hydrolysis of ATP coupled with the electrogenic transport of potassium into the cytoplasm. This subunit binds the periplasmic potassium ions and delivers the ions to the membrane domain of KdpB through an intramembrane tunnel. This Polynucleobacter asymbioticus (strain DSM 18221 / CIP 109841 / QLW-P1DMWA-1) (Polynucleobacter necessarius subsp. asymbioticus) protein is Potassium-transporting ATPase potassium-binding subunit.